The primary structure comprises 283 residues: Diaminopimelate epimerase (283 aa).

Residues Asn-13 and Asn-67 each coordinate substrate. Cys-76 (proton donor) is an active-site residue. Residues 77 to 78, Asn-166, Asn-199, and 217 to 218 contribute to the substrate site; these read GN and ER. Cys-226 acts as the Proton acceptor in catalysis. 227-228 serves as a coordination point for substrate; the sequence is GT.

The protein belongs to the diaminopimelate epimerase family. Homodimer.

Its subcellular location is the cytoplasm. The catalysed reaction is (2S,6S)-2,6-diaminopimelate = meso-2,6-diaminopimelate. The protein operates within amino-acid biosynthesis; L-lysine biosynthesis via DAP pathway; DL-2,6-diaminopimelate from LL-2,6-diaminopimelate: step 1/1. Its function is as follows. Catalyzes the stereoinversion of LL-2,6-diaminopimelate (L,L-DAP) to meso-diaminopimelate (meso-DAP), a precursor of L-lysine and an essential component of the bacterial peptidoglycan. The polypeptide is Diaminopimelate epimerase (Desulforapulum autotrophicum (strain ATCC 43914 / DSM 3382 / VKM B-1955 / HRM2) (Desulfobacterium autotrophicum)).